The sequence spans 322 residues: DNA repair and recombination protein RadA (322 aa).

Position 105–112 (105–112 (GMYGSGKT)) interacts with ATP.

This sequence belongs to the eukaryotic RecA-like protein family.

Functionally, involved in DNA repair and in homologous recombination. Binds and assemble on single-stranded DNA to form a nucleoprotein filament. Hydrolyzes ATP in a ssDNA-dependent manner and promotes DNA strand exchange between homologous DNA molecules. The polypeptide is DNA repair and recombination protein RadA (Methanococcus maripaludis (strain C5 / ATCC BAA-1333)).